Here is a 398-residue protein sequence, read N- to C-terminus: O-methyltransferase mpaG' (398 aa).

A (4E,8E)-10-(4,6-dihydroxy-7-methyl-3-oxo-1,3-dihydro-2-benzofuran-5-yl)-4,8-dimethyldeca-4,8-dienoate-binding site is contributed by S144. S144 contacts 4-farnesyl-3,5-dihydroxy-6-methylphthalide. S144 serves as a coordination point for 6-O-desmethylmycophenolate. N197 is an S-adenosyl-L-homocysteine binding site. Residue Y199 coordinates (4E,8E)-10-(4,6-dihydroxy-7-methyl-3-oxo-1,3-dihydro-2-benzofuran-5-yl)-4,8-dimethyldeca-4,8-dienoate. Y199 contacts 4-farnesyl-3,5-dihydroxy-6-methylphthalide. Position 199 (Y199) interacts with 6-O-desmethylmycophenolate. Y203, D237, G239, H244, D245, D264, and R265 together coordinate S-adenosyl-L-homocysteine. D264 lines the S-adenosyl-L-methionine pocket. (4E,8E)-10-(4,6-dihydroxy-7-methyl-3-oxo-1,3-dihydro-2-benzofuran-5-yl)-4,8-dimethyldeca-4,8-dienoate-binding residues include R265 and Q267. R265 provides a ligand contact to 6-O-desmethylmycophenolate. Residues D286, I287, and H302 each contribute to the S-adenosyl-L-homocysteine site. Position 303 (S303) interacts with (4E,8E)-10-(4,6-dihydroxy-7-methyl-3-oxo-1,3-dihydro-2-benzofuran-5-yl)-4,8-dimethyldeca-4,8-dienoate. S303 is a binding site for 4-farnesyl-3,5-dihydroxy-6-methylphthalide. Position 303 (S303) interacts with 6-O-desmethylmycophenolate. The active-site Proton acceptor is the H306. Residues E335 and E362 contribute to the active site.

This sequence belongs to the class I-like SAM-binding methyltransferase superfamily. Cation-independent O-methyltransferase family. Homodimer.

The protein localises to the cytoplasm. The protein resides in the cytosol. The enzyme catalyses (4E,8E)-10-(4,6-dihydroxy-7-methyl-3-oxo-1,3-dihydro-2-benzofuran-5-yl)-4,8-dimethyldeca-4,8-dienoate + S-adenosyl-L-methionine = (4E,8E)-10-(4-hydroxy-6-methoxy-7-methyl-3-oxo-1,3-dihydro-2-benzofuran-5-yl)-4,8-dimethyldeca-4,8-dienoate + S-adenosyl-L-homocysteine + H(+). It catalyses the reaction 4-farnesyl-3,5-dihydroxy-6-methylphthalide + S-adenosyl-L-methionine = 4-farnesyl-3,5-dihydroxy-6-methoxylphthalide + S-adenosyl-L-homocysteine + H(+). The catalysed reaction is 6-O-desmethylmycophenolate + S-adenosyl-L-methionine = mycophenolate + S-adenosyl-L-homocysteine + H(+). Its pathway is secondary metabolite biosynthesis; terpenoid biosynthesis. O-methyltransferase; part of the gene cluster that mediates the biosynthesis of mycophenolic acid (MPA), the first isolated antibiotic natural product in the world obtained from a culture of Penicillium brevicompactum in 1893. MpaG' catalyzes the 5-O-methylation of three precursors in MPA biosynthesis including demethylmycophenolic acid (DMMPA), 4-farnesyl-3,5-dihydroxy-6-methylphthalide (FDHMP), and an intermediate containing three fewer carbon atoms compared to FDHMP (FDHMP-3C) with different catalytic efficiencies. The first step of the pathway is the synthesis of 5-methylorsellinic acid (5MOA) by the cytosolic polyketide synthase mpaC. 5MOA is then converted to the phthalide compound 5,7-dihydroxy-4,6-dimethylphthalide (DHMP) by the endoplasmic reticulum-bound cytochrome P450 monooxygenase mpaDE. MpaDE first catalyzes hydroxylation of 5-MOA to 4,6-dihydroxy-2-(hydroxymethyl)-3-methylbenzoic acid (DHMB). MpaDE then acts as a lactone synthase that catalyzes the ring closure to convert DHMB into DHMP. The next step is the prenylation of DHMP by the Golgi apparatus-associated prenyltransferase mpaA to yield farnesyl-DHMP (FDHMP). The ER-bound oxygenase mpaB then mediates the oxidative cleavage the C19-C20 double bond in FDHMP to yield FDHMP-3C via a mycophenolic aldehyde intermediate. The O-methyltransferase mpaG catalyzes the methylation of FDHMP-3C to yield MFDHMP-3C. MpaG and mpaB can also switch the order in which they act and, in this case, the conversion of FDHMP to MFDHMP-3C can take place via 5-O-methyl-FDHMP (MFDHMP). After the cytosolic methylation of FDHMP-3C, MFDHMP-3C enters into peroxisomes probably via free diffusion due to its low molecular weight. Upon a peroxisomal CoA ligation reaction, catalyzed by a beta-oxidation component enzyme acyl-CoA ligase ACL891, MFDHMP-3C-CoA would then be restricted to peroxisomes for the following beta-oxidation pathway steps. The peroxisomal beta-oxidation machinery than converts MFDHMP-3C-CoA into MPA_CoA, via a beta-oxidation chain-shortening process. Finally mpaH acts as a peroxisomal acyl-CoA hydrolase with high substrate specificity toward MPA-CoA to release the final product MPA. MpaH can also hydrolyze DMMPA-CoA to release demethylmycophenolic acid (DMMPA) that is further converted to MPA by mpaG. The chain is O-methyltransferase mpaG' from Penicillium brevicompactum.